A 271-amino-acid chain; its full sequence is Tryptophan synthase alpha chain (271 aa).

Catalysis depends on proton acceptor residues glutamate 49 and aspartate 60.

It belongs to the TrpA family. As to quaternary structure, tetramer of two alpha and two beta chains.

The enzyme catalyses (1S,2R)-1-C-(indol-3-yl)glycerol 3-phosphate + L-serine = D-glyceraldehyde 3-phosphate + L-tryptophan + H2O. It functions in the pathway amino-acid biosynthesis; L-tryptophan biosynthesis; L-tryptophan from chorismate: step 5/5. Functionally, the alpha subunit is responsible for the aldol cleavage of indoleglycerol phosphate to indole and glyceraldehyde 3-phosphate. In Burkholderia cenocepacia (strain HI2424), this protein is Tryptophan synthase alpha chain.